The following is a 304-amino-acid chain: tRNA-uridine aminocarboxypropyltransferase 1 (304 aa).

2 disordered regions span residues 1-29 (MALSPSVVPQESKEDNANCVETKPSQTTS) and 165-193 (RNKADNLDVPPRKLKRTTDEEGWDLHEST). A compositionally biased stretch (basic and acidic residues) spans 180 to 193 (RTTDEEGWDLHEST). Positions 206–209 (DSTW) match the DXTW motif.

Belongs to the TDD superfamily. DTWD1 family.

It localises to the nucleus. The catalysed reaction is a uridine in tRNA + S-adenosyl-L-methionine = a 3-[(3S)-3-amino-3-carboxypropyl]uridine in tRNA + S-methyl-5'-thioadenosine + H(+). Catalyzes the formation of 3-(3-amino-3-carboxypropyl)uridine (acp3U) at position 20 in the D-loop of several cytoplasmic tRNAs (acp3U(20)). The protein is tRNA-uridine aminocarboxypropyltransferase 1 of Mus musculus (Mouse).